A 161-amino-acid chain; its full sequence is MSLLEREESWRRVVDYSHNLWCTCGNWQSHVEIQDEEPNCEQPEPAHWLEYVAVQWQARVRDSHDRWCLCNAWRDHALRGRWGTAYSSGSSASSSGFVAESKFTWWKRLRHSTRRWLFRRRRARYTPSNCGESSTSSGQSSGDESNCSLRTHGVYTRGEQH.

Residues 126 to 161 (TPSNCGESSTSSGQSSGDESNCSLRTHGVYTRGEQH) form a disordered region. Residues 128 to 148 (SNCGESSTSSGQSSGDESNCS) are compositionally biased toward low complexity.

Belongs to the herpesviridae US1 family.

This is an uncharacterized protein from Human cytomegalovirus (strain AD169) (HHV-5).